The following is a 216-amino-acid chain: GTP cyclohydrolase 1 (216 aa).

Residues Cys-108, His-111, and Cys-179 each contribute to the Zn(2+) site.

It belongs to the GTP cyclohydrolase I family. As to quaternary structure, toroid-shaped homodecamer, composed of two pentamers of five dimers.

The catalysed reaction is GTP + H2O = 7,8-dihydroneopterin 3'-triphosphate + formate + H(+). Its pathway is cofactor biosynthesis; 7,8-dihydroneopterin triphosphate biosynthesis; 7,8-dihydroneopterin triphosphate from GTP: step 1/1. The chain is GTP cyclohydrolase 1 from Shewanella sp. (strain ANA-3).